Here is a 117-residue protein sequence, read N- to C-terminus: Large ribosomal subunit protein bL20 (117 aa).

Belongs to the bacterial ribosomal protein bL20 family.

Binds directly to 23S ribosomal RNA and is necessary for the in vitro assembly process of the 50S ribosomal subunit. It is not involved in the protein synthesizing functions of that subunit. The chain is Large ribosomal subunit protein bL20 from Rickettsia canadensis (strain McKiel).